The primary structure comprises 394 residues: Elongation factor Tu (394 aa).

One can recognise a tr-type G domain in the interval 10 to 204; the sequence is KPHVNIGTIG…AVDSYIPQPV (195 aa). The tract at residues 19–26 is G1; the sequence is GHVDHGKT. 19–26 provides a ligand contact to GTP; that stretch reads GHVDHGKT. Threonine 26 is a binding site for Mg(2+). The G2 stretch occupies residues 60–64; it reads GITIS. Residues 81-84 form a G3 region; it reads DCPG. GTP-binding positions include 81–85 and 136–139; these read DCPGH and NKID. The interval 136 to 139 is G4; the sequence is NKID. A G5 region spans residues 174–176; it reads SAL.

The protein belongs to the TRAFAC class translation factor GTPase superfamily. Classic translation factor GTPase family. EF-Tu/EF-1A subfamily. Monomer.

The protein resides in the cytoplasm. The catalysed reaction is GTP + H2O = GDP + phosphate + H(+). GTP hydrolase that promotes the GTP-dependent binding of aminoacyl-tRNA to the A-site of ribosomes during protein biosynthesis. The protein is Elongation factor Tu of Rickettsia peacockii (strain Rustic).